A 225-amino-acid polypeptide reads, in one-letter code: Uridylate kinase (225 aa).

Residue 9–10 (GS) coordinates ATP. Residue G46 coordinates UMP. Positions 47 and 51 each coordinate ATP. Residues D67 and 115–121 (THPAHTT) contribute to the UMP site. T141, N142, Y147, and D150 together coordinate ATP.

This sequence belongs to the UMP kinase family. As to quaternary structure, homohexamer.

The protein resides in the cytoplasm. It catalyses the reaction UMP + ATP = UDP + ADP. It participates in pyrimidine metabolism; CTP biosynthesis via de novo pathway; UDP from UMP (UMPK route): step 1/1. Its activity is regulated as follows. Inhibited by UTP. In terms of biological role, catalyzes the reversible phosphorylation of UMP to UDP. This Methanococcus vannielii (strain ATCC 35089 / DSM 1224 / JCM 13029 / OCM 148 / SB) protein is Uridylate kinase.